A 137-amino-acid chain; its full sequence is Probable 4-amino-4-deoxy-L-arabinose-phosphoundecaprenol flippase subunit ArnF (137 aa).

Residues 1–3 (MNA) are Cytoplasmic-facing. A helical transmembrane segment spans residues 4-24 (LRGWLAALGSVLLASAAQLGM). The Periplasmic segment spans residues 25-44 (RWGMSRLPLPEAWAGQTPER). Residues 45–65 (AALLAVALAVAAYAASLLCWL) traverse the membrane as a helical segment. Residues 66–76 (AALRHLPLGRA) are Cytoplasmic-facing. Residues 77-97 (YSLLSASYALVYLLAASLPAF) traverse the membrane as a helical segment. The Periplasmic portion of the chain corresponds to 98–100 (DET). Residues 101–121 (FSTSKTLGVGLVVLGVLTVNA) traverse the membrane as a helical segment. The Cytoplasmic portion of the chain corresponds to 122 to 137 (RRTAAAPAHHPSRKAP).

This sequence belongs to the ArnF family. In terms of assembly, heterodimer of ArnE and ArnF.

The protein localises to the cell inner membrane. The protein operates within bacterial outer membrane biogenesis; lipopolysaccharide biosynthesis. Its function is as follows. Translocates 4-amino-4-deoxy-L-arabinose-phosphoundecaprenol (alpha-L-Ara4N-phosphoundecaprenol) from the cytoplasmic to the periplasmic side of the inner membrane. In Pseudomonas aeruginosa (strain ATCC 15692 / DSM 22644 / CIP 104116 / JCM 14847 / LMG 12228 / 1C / PRS 101 / PAO1), this protein is Probable 4-amino-4-deoxy-L-arabinose-phosphoundecaprenol flippase subunit ArnF.